The sequence spans 524 residues: Gamma-taxilin (524 aa).

A compositionally biased stretch (basic and acidic residues) spans Met1–Arg10. Disordered regions lie at residues Met1–Ile37 and Leu64–Ser86. Omega-N-methylarginine is present on residues Arg12 and Arg24. Ser79, Ser86, and Ser97 each carry phosphoserine. A compositionally biased stretch (basic and acidic residues) spans Arg106–Arg115. The interval Arg106–Asn130 is disordered. A coiled-coil region spans residues Glu153 to Asp465. Tyr283 carries the post-translational modification Phosphotyrosine. A disordered region spans residues Val501–Asp524. Ser512 carries the phosphoserine modification.

The protein belongs to the taxilin family. As to quaternary structure, binds to the C-terminal coiled coil region of syntaxin family members STX1A, STX3A and STX4A. Forms a heterodimer with ATF4 in osteoblasts.

The protein localises to the nucleus membrane. Its subcellular location is the cytoplasm. It is found in the cytosol. In terms of biological role, may be involved in intracellular vesicle traffic. Inhibits ATF4-mediated transcription, possibly by dimerizing with ATF4 to form inactive dimers that cannot bind DNA. May be involved in regulating bone mass density through an ATF4-dependent pathway. May be involved in cell cycle progression. This is Gamma-taxilin (Txlng) from Mus musculus (Mouse).